A 265-amino-acid polypeptide reads, in one-letter code: Exosome complex component Rrp4 (265 aa).

One can recognise an S1 motif domain in the interval 65–137 (GDNVIGKIVD…EVNNIDLTTK (73 aa)). One can recognise a KH domain in the interval 147-205 (KGGQIVKITPSRVPRVIGRGGSMINMIKKLTMTRIIVGQNGWIWVNGKNEALEKLAIEA). Positions 241 to 254 (EIPELEEEPQEETE) are enriched in acidic residues. The tract at residues 241–265 (EIPELEEEPQEETEVNNNDGETRRT) is disordered.

It belongs to the RRP4 family. In terms of assembly, component of the archaeal exosome complex. Forms a trimer of Rrp4 and/or Csl4 subunits. The trimer associates with a hexameric ring-like arrangement composed of 3 Rrp41-Rrp42 heterodimers.

It is found in the cytoplasm. Its function is as follows. Non-catalytic component of the exosome, which is a complex involved in RNA degradation. Increases the RNA binding and the efficiency of RNA degradation. Confers strong poly(A) specificity to the exosome. The protein is Exosome complex component Rrp4 of Pyrococcus horikoshii (strain ATCC 700860 / DSM 12428 / JCM 9974 / NBRC 100139 / OT-3).